The primary structure comprises 299 residues: Homoserine kinase (299 aa).

P84–A94 is an ATP binding site.

Belongs to the GHMP kinase family. Homoserine kinase subfamily.

Its subcellular location is the cytoplasm. The enzyme catalyses L-homoserine + ATP = O-phospho-L-homoserine + ADP + H(+). It functions in the pathway amino-acid biosynthesis; L-threonine biosynthesis; L-threonine from L-aspartate: step 4/5. Its function is as follows. Catalyzes the ATP-dependent phosphorylation of L-homoserine to L-homoserine phosphate. This chain is Homoserine kinase, found in Helicobacter hepaticus (strain ATCC 51449 / 3B1).